The following is a 268-amino-acid chain: Putative hydro-lyase ACICU_01268 (268 aa).

The protein belongs to the D-glutamate cyclase family.

This is Putative hydro-lyase ACICU_01268 from Acinetobacter baumannii (strain ACICU).